Reading from the N-terminus, the 361-residue chain is MTNENYTGVTTGTIATACSLAALESILDTSDIDCVKVKTPKKTLDIIIDECKRLSHSSACAVAHKNPYNDPDVTVGLAIVATVELLDKTSDGDSVIITGGEGVGKITKPGLQIPVGEYAINPVPRRMIRKNLERILPEDKVAKVTISIPEGRKIAKKTMNPKLGIVGGISVIGTTGIARSMSSEAYKNSIVTQIDVALALNLDNLVFVPGNIGEKLALKQLDITKQHIIQTGNYVGFMFEEAKKRGIDEFTFFGHIGKLIKIAGGIFNTKHAIADGRREIMITHAGICGADTKTLQKLYDSKTTEDMLDILDEENLHLDVCNSIALAIKERCMQRFDLDLNVILVDMEGNYLNDNFERFLL.

The protein belongs to the CbiD family.

The catalysed reaction is Co-precorrin-5B + S-adenosyl-L-methionine = Co-precorrin-6A + S-adenosyl-L-homocysteine. The protein operates within cofactor biosynthesis; adenosylcobalamin biosynthesis; cob(II)yrinate a,c-diamide from sirohydrochlorin (anaerobic route): step 6/10. In terms of biological role, catalyzes the methylation of C-1 in cobalt-precorrin-5B to form cobalt-precorrin-6A. This chain is Cobalt-precorrin-5B C(1)-methyltransferase, found in Methanobrevibacter smithii (strain ATCC 35061 / DSM 861 / OCM 144 / PS).